The chain runs to 178 residues: Large ribosomal subunit protein uL6 (178 aa).

This sequence belongs to the universal ribosomal protein uL6 family. As to quaternary structure, part of the 50S ribosomal subunit.

Its function is as follows. This protein binds to the 23S rRNA, and is important in its secondary structure. It is located near the subunit interface in the base of the L7/L12 stalk, and near the tRNA binding site of the peptidyltransferase center. The protein is Large ribosomal subunit protein uL6 of Shouchella clausii (strain KSM-K16) (Alkalihalobacillus clausii).